Consider the following 125-residue polypeptide: PEP-dependent dihydroxyacetone kinase 2, phosphoryl donor subunit DhaM (125 aa).

The 125-residue stretch at Met-1–His-125 folds into the PTS EIIA type-4 domain. His-9 serves as the catalytic Tele-phosphohistidine intermediate.

Belongs to the PEP-utilizing enzyme family. As to quaternary structure, homodimer. The dihydroxyacetone kinase complex is composed of a homodimer of DhaM, a homodimer of DhaK and the subunit DhaL.

The protein resides in the cytoplasm. It catalyses the reaction dihydroxyacetone + phosphoenolpyruvate = dihydroxyacetone phosphate + pyruvate. Functionally, component of the dihydroxyacetone kinase complex, which is responsible for the phosphoenolpyruvate (PEP)-dependent phosphorylation of dihydroxyacetone. DhaM serves as the phosphoryl donor. Is phosphorylated by phosphoenolpyruvate in an EI- and HPr-dependent reaction, and a phosphorelay system on histidine residues finally leads to phosphoryl transfer to DhaL and dihydroxyacetone. This chain is PEP-dependent dihydroxyacetone kinase 2, phosphoryl donor subunit DhaM, found in Listeria innocua serovar 6a (strain ATCC BAA-680 / CLIP 11262).